We begin with the raw amino-acid sequence, 425 residues long: Metalloprotease AF_0655 (425 aa).

The protein belongs to the peptidase U62 family.

In terms of biological role, probable metalloprotease. The chain is Metalloprotease AF_0655 from Archaeoglobus fulgidus (strain ATCC 49558 / DSM 4304 / JCM 9628 / NBRC 100126 / VC-16).